The following is a 1187-amino-acid chain: RNA helicase Mov10l1 (1187 aa).

The interval Arg273–Pro347 is disordered. 2 stretches are compositionally biased toward basic and acidic residues: residues His296–Glu307 and Ala322–Pro339. Tandem repeats lie at residues Thr642–Ile652, Ile653–Val663, Thr664–Val674, Thr675–Ile685, and Thr686–Asn696. A 5 X 11 AA tandem repeats of [TI]-R-N-[DN]-[GS]-Q-[SP]-I-T-[NK]-[IVN] region spans residues Thr642 to Asn696. The segment at Thr686–Glu727 is disordered. The span at Thr699 to Glu720 shows a compositional bias: basic and acidic residues. Position 772–779 (Gly772–Thr779) interacts with ATP. The DEAG box motif lies at Asp888–Gly891.

It belongs to the DNA2/NAM7 helicase family. SDE3 subfamily. Interacts with PIWIL1. Interacts with PIWIL2. Interacts with PIWIL4. Interacts with HSPA2. Interacts with PLD6. In terms of tissue distribution, isoform 1: Specifically expressed in testis. Isoform 1: In testis, present in pachytene spermatocytes but absent in postmeiotic spermatids (at protein level). Isoform 2: Present in cardiomyocytes (at protein level). Isoform 2: Heart specific. Isoform 3: Heart specific and is specifically expressed in cardiac myocytes.

It is found in the cytoplasm. The catalysed reaction is ATP + H2O = ADP + phosphate + H(+). Functionally, ATP-dependent RNA helicase required during spermatogenesis to repress transposable elements and prevent their mobilization, which is essential for germline integrity. Acts via the piRNA metabolic process, which mediates the repression of transposable elements during meiosis by forming complexes composed of piRNAs and Piwi proteins and governs the methylation and subsequent repression of transposons. Involved in the primary piRNA metabolic process. Specifically binds to piRNA precursors and promotes the generation of intermediate piRNA processing fragments that are subsequently loaded to Piwi proteins. Acts via its ATP-dependent RNA helicase activity: displays 5'-3' RNA unwinding activity and probably mediates unwinding and funneling of single-stranded piRNA precursor transcripts to the endonuclease that catalyzes the first cleavage step of piRNA processing to generate piRNA intermediate fragments that are subsequently loaded to Piwi proteins. May act downstream of MEF2C during heart formation. Acts as a cardiac-specific suppressor of cardiomyocyte hypertrophy and cell cycle progression, suggesting that it may suppress these processes through the regulation of CDKN1A. Such results however require additional evidence. The polypeptide is RNA helicase Mov10l1 (Mus musculus (Mouse)).